Here is a 490-residue protein sequence, read N- to C-terminus: Cytochrome P450 2C13, male-specific (490 aa).

Residue Cys435 coordinates heme.

Belongs to the cytochrome P450 family. The cofactor is heme. As to expression, liver, and to a lesser extent in prostate, kidney, heart and brain.

Its subcellular location is the endoplasmic reticulum membrane. The protein resides in the microsome membrane. It catalyses the reaction an organic molecule + reduced [NADPH--hemoprotein reductase] + O2 = an alcohol + oxidized [NADPH--hemoprotein reductase] + H2O + H(+). Functionally, cytochromes P450 are a group of heme-thiolate monooxygenases. In liver microsomes, this enzyme is involved in an NADPH-dependent electron transport pathway. It oxidizes a variety of structurally unrelated compounds, including steroids, fatty acids, and xenobiotics. The sequence is that of Cytochrome P450 2C13, male-specific (Cyp2c13) from Rattus norvegicus (Rat).